The following is a 300-amino-acid chain: ETS homologous factor (300 aa).

Residues 29–115 (STCNVSSGFF…SNLQHLKWNG (87 aa)) form the PNT domain. The tract at residues 179–204 (LPIAESPDTKKEQDHPTKPHTKKHNP) is disordered. Over residues 185–195 (PDTKKEQDHPT) the composition is skewed to basic and acidic residues. Positions 207 to 289 (THLWEFIRDI…DGRRLVYKFG (83 aa)) form a DNA-binding region, ETS.

Belongs to the ETS family.

Its subcellular location is the nucleus. In terms of biological role, transcriptional activator that may play a role in regulating epithelial cell differentiation and proliferation. May act as a repressor for a specific subset of ETS/AP-1-responsive genes, and as a modulator of the nuclear response to mitogen-activated protein kinase signaling cascades. Binds to DNA sequences containing the consensus nucleotide core sequence GGAA. Involved in regulation of TNFRSF10B/DR5 expression through Ets-binding sequences on the TNFRSF10B/DR5 promoter. The sequence is that of ETS homologous factor (EHF) from Bos taurus (Bovine).